The following is a 361-amino-acid chain: MAGNSIGQHFRVTTFGESHGLALGCIVDGCPPGLELTEADLQVDLDRRKPGTSKYTTQRREADEVKILSGVFEGKTTGTSIGLLIENTDQRSKDYSEIKDKFRPGHADYTYHQKYGQRDYRGGGRSSARETAMRVAAGAVAKKYLKQEFGIEIRAYLSQMGDVSIDSVDWNEIENNAFFCPDASKVDAFDELIRKLKKEGDSIGAKITVVAQGVPVGLGEPVFDRLDADVAHALMGINAVKGVEIGDGFEVVNQRGSEHRDPLTPEGFSSNHAGGILGGISSGQDIVAHIALKPTSSITVPGETITRSGEKTELITKGRHDPCVGIRAVPIAEAMLAIVVMDHLVRHRGQNFGVQTETPKI.

Arg-48 provides a ligand contact to NADP(+). Residues 125 to 127 (RSS), 238 to 239 (NA), Gly-278, 293 to 297 (KPTSS), and Arg-319 contribute to the FMN site.

This sequence belongs to the chorismate synthase family. Homotetramer. Requires FMNH2 as cofactor.

The catalysed reaction is 5-O-(1-carboxyvinyl)-3-phosphoshikimate = chorismate + phosphate. It functions in the pathway metabolic intermediate biosynthesis; chorismate biosynthesis; chorismate from D-erythrose 4-phosphate and phosphoenolpyruvate: step 7/7. Catalyzes the anti-1,4-elimination of the C-3 phosphate and the C-6 proR hydrogen from 5-enolpyruvylshikimate-3-phosphate (EPSP) to yield chorismate, which is the branch point compound that serves as the starting substrate for the three terminal pathways of aromatic amino acid biosynthesis. This reaction introduces a second double bond into the aromatic ring system. This is Chorismate synthase from Aliivibrio fischeri (strain ATCC 700601 / ES114) (Vibrio fischeri).